The sequence spans 294 residues: 2,2',3-trihydroxybiphenyl dioxygenase (294 aa).

2 consecutive VOC domains span residues 7 to 120 (GYLI…LYVE) and 144 to 264 (GLGH…LGFG). Residues H147, H209, and E260 each contribute to the Fe cation site.

This sequence belongs to the extradiol ring-cleavage dioxygenase family. Monomer. It depends on Fe(2+) as a cofactor.

It participates in xenobiotic degradation; dibenzo-p-dioxin degradation; 2-hydroxymuconate and catechol from dibenzo-p-dioxin: step 2/3. Its pathway is xenobiotic degradation; dibenzofuran degradation; 2-hydroxy-2,4-pentadienoate and salicylate from dibenzofuran: step 2/3. Functionally, responsible for meta-cleavage of the first aromatic ring of 2,2',3-trihydroxybiphenyl and 2,3-dihydroxybiphenyl. 2,2',3-trihydroxydiphenyl ether, catechol, 3-methylcatechol, and 4-methylcatechol are oxidized less efficiently and 3,4-dihydroxybiphenyl is oxidized considerably less efficiently. The protein is 2,2',3-trihydroxybiphenyl dioxygenase (dbfB) of Sphingomonas paucimobilis (Pseudomonas paucimobilis).